Here is a 265-residue protein sequence, read N- to C-terminus: Basic leucine zipper 6 (265 aa).

2 disordered regions span residues 1–24 and 77–139; these read MAQL…SAGG and LMSM…RDPK. Low complexity predominate over residues 85–97; the sequence is GGSSAPGSDNGGS. A compositionally biased stretch (polar residues) spans 122 to 132; sequence TQEQAAATSPT. The 53-residue stretch at 137 to 189 folds into the bZIP domain; the sequence is DPKRVKRILANRQSAQRSRVRKLQYISELERSVTTLQNEVSVLSPRVAFLDQQ. The segment at 139-158 is basic motif; that stretch reads KRVKRILANRQSAQRSRVRK. Positions 165-186 are leucine-zipper; the sequence is LERSVTTLQNEVSVLSPRVAFL. Positions 239 to 265 are disordered; it reads LSGGLAADHAHVHGGPPPVRAEKELMS.

Expressed in roots, shoots and panicles.

The protein resides in the nucleus. Transcription regulator. This is Basic leucine zipper 6 (BZIP06) from Oryza sativa subsp. japonica (Rice).